The following is a 492-amino-acid chain: Steroid 21-hydroxylase (492 aa).

2 residues coordinate heme b: R91 and K120. Position 231 (R231) interacts with 17alpha-hydroxyprogesterone. A progesterone-binding site is contributed by R231. Residues H363, R424, and C426 each contribute to the heme b site.

Belongs to the cytochrome P450 family. The cofactor is heme b.

The protein localises to the endoplasmic reticulum membrane. Its subcellular location is the microsome membrane. It catalyses the reaction 17alpha-hydroxyprogesterone + reduced [NADPH--hemoprotein reductase] + O2 = 11-deoxycortisol + oxidized [NADPH--hemoprotein reductase] + H2O + H(+). The enzyme catalyses progesterone + reduced [NADPH--hemoprotein reductase] + O2 = 21-hydroxyprogesterone + oxidized [NADPH--hemoprotein reductase] + H2O + H(+). In terms of biological role, specifically catalyzes the 21-hydroxylation of steroids. Required for the adrenal synthesis of mineralocorticoids and glucocorticoids. This is Steroid 21-hydroxylase (CYP21) from Felis catus (Cat).